Reading from the N-terminus, the 408-residue chain is 1-deoxy-D-xylulose 5-phosphate reductoisomerase (408 aa).

Positions 26, 27, 28, 29, and 143 each coordinate NADPH. Lysine 144 serves as a coordination point for 1-deoxy-D-xylulose 5-phosphate. An NADPH-binding site is contributed by glutamate 145. Aspartate 167 lines the Mn(2+) pocket. 4 residues coordinate 1-deoxy-D-xylulose 5-phosphate: serine 168, glutamate 169, serine 193, and histidine 216. Glutamate 169 is a Mn(2+) binding site. Residue glycine 222 coordinates NADPH. 4 residues coordinate 1-deoxy-D-xylulose 5-phosphate: serine 229, asparagine 234, lysine 235, and glutamate 238. Glutamate 238 lines the Mn(2+) pocket.

It belongs to the DXR family. Requires Mg(2+) as cofactor. It depends on Mn(2+) as a cofactor.

It carries out the reaction 2-C-methyl-D-erythritol 4-phosphate + NADP(+) = 1-deoxy-D-xylulose 5-phosphate + NADPH + H(+). The protein operates within isoprenoid biosynthesis; isopentenyl diphosphate biosynthesis via DXP pathway; isopentenyl diphosphate from 1-deoxy-D-xylulose 5-phosphate: step 1/6. Functionally, catalyzes the NADPH-dependent rearrangement and reduction of 1-deoxy-D-xylulose-5-phosphate (DXP) to 2-C-methyl-D-erythritol 4-phosphate (MEP). The chain is 1-deoxy-D-xylulose 5-phosphate reductoisomerase from Corynebacterium jeikeium (strain K411).